Consider the following 357-residue polypeptide: sn-glycerol-3-phosphate import ATP-binding protein UgpC (357 aa).

An ABC transporter domain is found at 4–235; the sequence is LKLQAVTKSY…PASLFVASFI (232 aa). Residue 37–44 participates in ATP binding; that stretch reads GPSGCGKS.

It belongs to the ABC transporter superfamily. sn-glycerol-3-phosphate importer (TC 3.A.1.1.3) family. In terms of assembly, the complex is composed of two ATP-binding proteins (UgpC), two transmembrane proteins (UgpA and UgpE) and a solute-binding protein (UgpB).

Its subcellular location is the cell inner membrane. The catalysed reaction is sn-glycerol 3-phosphate(out) + ATP + H2O = sn-glycerol 3-phosphate(in) + ADP + phosphate + H(+). Its function is as follows. Part of the ABC transporter complex UgpBAEC involved in sn-glycerol-3-phosphate (G3P) import. Responsible for energy coupling to the transport system. The protein is sn-glycerol-3-phosphate import ATP-binding protein UgpC of Yersinia pseudotuberculosis serotype I (strain IP32953).